Here is a 334-residue protein sequence, read N- to C-terminus: Glycerol-3-phosphate dehydrogenase [NAD(P)+] (334 aa).

The NADPH site is built by Ser11, Trp12, Arg32, and Lys106. 2 residues coordinate sn-glycerol 3-phosphate: Lys106 and Gly136. Residue Ala140 coordinates NADPH. Sn-glycerol 3-phosphate contacts are provided by Lys191, Asp244, Ser254, Arg255, and Asn256. The active-site Proton acceptor is the Lys191. Residue Arg255 participates in NADPH binding. 2 residues coordinate NADPH: Val279 and Glu281.

The protein belongs to the NAD-dependent glycerol-3-phosphate dehydrogenase family.

Its subcellular location is the cytoplasm. It catalyses the reaction sn-glycerol 3-phosphate + NAD(+) = dihydroxyacetone phosphate + NADH + H(+). The enzyme catalyses sn-glycerol 3-phosphate + NADP(+) = dihydroxyacetone phosphate + NADPH + H(+). The protein operates within membrane lipid metabolism; glycerophospholipid metabolism. In terms of biological role, catalyzes the reduction of the glycolytic intermediate dihydroxyacetone phosphate (DHAP) to sn-glycerol 3-phosphate (G3P), the key precursor for phospholipid synthesis. The sequence is that of Glycerol-3-phosphate dehydrogenase [NAD(P)+] from Parafrankia sp. (strain EAN1pec).